The primary structure comprises 331 residues: Probable allantoicase (331 aa).

It belongs to the allantoicase family.

The catalysed reaction is allantoate + H2O = (S)-ureidoglycolate + urea. Its pathway is nitrogen metabolism; (S)-allantoin degradation; (S)-ureidoglycolate from allantoate (aminidohydrolase route): step 1/1. In Pseudomonas fluorescens (strain ATCC BAA-477 / NRRL B-23932 / Pf-5), this protein is Probable allantoicase.